We begin with the raw amino-acid sequence, 347 residues long: D-alanine--D-alanine ligase (347 aa).

One can recognise an ATP-grasp domain in the interval 131–333; sequence KRVLESAGIA…YPDLIERLVE (203 aa). 161–216 serves as a coordination point for ATP; it reads EEELTYPVFTKPSNMGSSVGISKSENQEELRQALKLAFQYDSRVLVEQGVNAREIE. Mg(2+) is bound by residues Asp287, Glu300, and Asn302.

The protein belongs to the D-alanine--D-alanine ligase family. Mg(2+) serves as cofactor. Requires Mn(2+) as cofactor.

Its subcellular location is the cytoplasm. The enzyme catalyses 2 D-alanine + ATP = D-alanyl-D-alanine + ADP + phosphate + H(+). It functions in the pathway cell wall biogenesis; peptidoglycan biosynthesis. In terms of biological role, cell wall formation. This Streptococcus pneumoniae (strain Hungary19A-6) protein is D-alanine--D-alanine ligase.